We begin with the raw amino-acid sequence, 162 residues long: Large ribosomal subunit protein bL17 (162 aa).

A disordered region spans residues 118-162 (RAPAAAPEAEEKGEKKAAGKAEKAPKAAKAPKAEKKPAKKAAKAE). The segment covering 126–162 (AEEKGEKKAAGKAEKAPKAAKAPKAEKKPAKKAAKAE) has biased composition (basic and acidic residues).

The protein belongs to the bacterial ribosomal protein bL17 family. As to quaternary structure, part of the 50S ribosomal subunit. Contacts protein L32.

The protein is Large ribosomal subunit protein bL17 of Anaeromyxobacter dehalogenans (strain 2CP-C).